The chain runs to 152 residues: uncharacterized protein (152 aa).

One can recognise an HTH marR-type domain in the interval 3–143; it reads EQKLCQAINL…IIEIFTILKS (141 aa). Positions 55–78 form a DNA-binding region, H-T-H motif; sequence PGSLAMYQNVHKSAISNRLKKLLE.

This is an uncharacterized protein from Bacillus subtilis (strain 168).